We begin with the raw amino-acid sequence, 562 residues long: Putative transport protein ETA_21820 (562 aa).

The next 5 membrane-spanning stretches (helical) occupy residues 8–28 (LLIG…LCLG), 32–52 (LGSV…LLGQ), 66–86 (FMLF…SIFF), 94–114 (MLAI…GKLF), and 158–178 (HLSL…IFGA). RCK C-terminal domains lie at 202-288 (LDPD…SFRN) and 290-373 (KEVF…RIGF). 6 helical membrane-spanning segments follow: residues 383–403 (LLAF…TFQF), 406–426 (FNFG…LGFL), 440–460 (ALTM…GLSA), 473–493 (LLML…CFLF), 503–523 (ALLF…EIIS), and 540–560 (AIAN…WPIL).

Belongs to the AAE transporter (TC 2.A.81) family. YbjL subfamily.

It localises to the cell membrane. This is Putative transport protein ETA_21820 from Erwinia tasmaniensis (strain DSM 17950 / CFBP 7177 / CIP 109463 / NCPPB 4357 / Et1/99).